Consider the following 180-residue polypeptide: ATP-dependent protease subunit HslV (180 aa).

The active site involves T7. Na(+)-binding residues include G165, C168, and T171.

It belongs to the peptidase T1B family. HslV subfamily. A double ring-shaped homohexamer of HslV is capped on each side by a ring-shaped HslU homohexamer. The assembly of the HslU/HslV complex is dependent on binding of ATP.

It localises to the cytoplasm. It catalyses the reaction ATP-dependent cleavage of peptide bonds with broad specificity.. Its activity is regulated as follows. Allosterically activated by HslU binding. Protease subunit of a proteasome-like degradation complex believed to be a general protein degrading machinery. This Bacillus cereus (strain G9842) protein is ATP-dependent protease subunit HslV.